The primary structure comprises 745 residues: Phosphoribosylformylglycinamidine synthase subunit PurL (745 aa).

The active site involves H41. 2 residues coordinate ATP: Y44 and K83. Position 85 (E85) interacts with Mg(2+). Residues 86 to 89 and R108 each bind substrate; that span reads SHNH. The active-site Proton acceptor is H87. A Mg(2+)-binding site is contributed by D109. Q232 is a binding site for substrate. D260 contacts Mg(2+). Residue 304–306 participates in substrate binding; that stretch reads ESQ. The ATP site is built by D494 and G531. N532 is a Mg(2+) binding site. Position 534 (S534) interacts with substrate.

Belongs to the FGAMS family. Monomer. Part of the FGAM synthase complex composed of 1 PurL, 1 PurQ and 2 PurS subunits.

It is found in the cytoplasm. The catalysed reaction is N(2)-formyl-N(1)-(5-phospho-beta-D-ribosyl)glycinamide + L-glutamine + ATP + H2O = 2-formamido-N(1)-(5-O-phospho-beta-D-ribosyl)acetamidine + L-glutamate + ADP + phosphate + H(+). The protein operates within purine metabolism; IMP biosynthesis via de novo pathway; 5-amino-1-(5-phospho-D-ribosyl)imidazole from N(2)-formyl-N(1)-(5-phospho-D-ribosyl)glycinamide: step 1/2. In terms of biological role, part of the phosphoribosylformylglycinamidine synthase complex involved in the purines biosynthetic pathway. Catalyzes the ATP-dependent conversion of formylglycinamide ribonucleotide (FGAR) and glutamine to yield formylglycinamidine ribonucleotide (FGAM) and glutamate. The FGAM synthase complex is composed of three subunits. PurQ produces an ammonia molecule by converting glutamine to glutamate. PurL transfers the ammonia molecule to FGAR to form FGAM in an ATP-dependent manner. PurS interacts with PurQ and PurL and is thought to assist in the transfer of the ammonia molecule from PurQ to PurL. The polypeptide is Phosphoribosylformylglycinamidine synthase subunit PurL (Aquifex aeolicus (strain VF5)).